Consider the following 286-residue polypeptide: Undecaprenyl-diphosphatase (286 aa).

The next 7 helical transmembrane spans lie at 5 to 25, 55 to 75, 92 to 112, 122 to 142, 185 to 205, 229 to 249, and 264 to 284; these read WFII…FLPV, IDAF…VLYW, SGFK…VLGL, LFNP…MIFA, IIGA…SFFL, MHIV…LIVV, and FAMY…FNVI.

It belongs to the UppP family.

It is found in the cell membrane. The enzyme catalyses di-trans,octa-cis-undecaprenyl diphosphate + H2O = di-trans,octa-cis-undecaprenyl phosphate + phosphate + H(+). Catalyzes the dephosphorylation of undecaprenyl diphosphate (UPP). Confers resistance to bacitracin. The sequence is that of Undecaprenyl-diphosphatase from Clostridium novyi (strain NT).